A 955-amino-acid polypeptide reads, in one-letter code: Villin-5 (955 aa).

4 Gelsolin-like repeats span residues 29 to 111 (FKPV…DKFL), 152 to 218 (VHVK…VEDG), 274 to 339 (LLHE…TVMF), and 644 to 712 (HFTQ…GSEP). Disordered stretches follow at residues 741–783 (KGGG…RVRV) and 801–895 (NSRN…GLPV). Positions 756–776 (PTYSGRSTVQDKSQRSRSMSF) are enriched in polar residues. The span at 817 to 836 (PKSATPDSSSAPSKSSATAS) shows a compositional bias: low complexity. The span at 842 to 864 (DRPKSVKDGSELEKPKQEEDAKE) shows a compositional bias: basic and acidic residues. A compositionally biased stretch (polar residues) spans 867–878 (NTMTSRVESLTI). An HP domain is found at 890 to 955 (DEGLPVYPYD…NRMKIALQLF (66 aa)).

This sequence belongs to the villin/gelsolin family.

The protein resides in the cytoplasm. It localises to the cytoskeleton. In terms of biological role, ca(2+)-regulated actin-binding protein. Binds actin microfilaments (MFs). Involved in actin filament bundling, severing and capping. Caps the barbed end of actin filaments and is able to sever them in a calcium-dependent manner. The chain is Villin-5 from Oryza sativa subsp. japonica (Rice).